The primary structure comprises 996 residues: Disabled homolog 2-interacting protein (996 aa).

Residues 1–118 form the C2 domain; sequence MENLRRAVHP…AGRQFVEKWY (118 aa). Positions 194-402 constitute a Ras-GAP domain; it reads GKVKDFLTDL…TNMQRFLLEI (209 aa). Residues 453-750 form a necessary for interaction with AKT1 region; sequence LRDVHTALST…RTPPTMLSTL (298 aa). Residues 460-475 are compositionally biased toward polar residues; it reads LSTPGSGQLPGTNDLA. Disordered stretches follow at residues 460-486 and 522-545; these read LSTP…SSVS and RSSG…PDLQ. Positions 476–486 are enriched in low complexity; that stretch reads STPGSGSSSVS. Polar residues predominate over residues 522–538; the sequence is RSSGVQPSPARSSSYSE. Ser535 carries the post-translational modification Phosphoserine; by MAP3K5 and RIPK1. Ser554 carries the phosphoserine modification. 5 disordered regions span residues 611–630, 650–672, 702–805, 822–841, and 971–996; these read VPTP…PQLL, PRGL…NSEE, SLTE…SPNA, EDEG…SKEE, and RNGV…SSNC. Residues 659-672 show a composition bias toward low complexity; sequence EGHSSLSSHSNSEE. A compositionally biased stretch (pro residues) spans 726–738; it reads QPPPPPPPPPPAP. 2 stretches are compositionally biased toward polar residues: residues 746 to 762 and 774 to 783; these read MLST…TLAS and LRQQSSSSKG. 2 positions are modified to phosphoserine: Ser785 and Ser802. The span at 830 to 841 shows a compositional bias: basic and acidic residues; the sequence is PPHRDRLRSKEE. A coiled-coil region spans residues 832–966; it reads HRDRLRSKEE…SALTQLKERY (135 aa). Over residues 974–996 the composition is skewed to polar residues; it reads VSPTNPTKLQITENGEFRNSSNC.

In terms of assembly, on plasma membrane, exists in an inactive form complexed with TNFR1; in response to TNF-alpha, dissociates from TNFR1 complex, translocates to cytoplasm and forms part of an intracellular signaling complex comprising TRADD, RIPK1, TRAF2 and MAP3K5. Interacts (via NPXY motif) with DAB2 (via PID domain). Interacts (via PH domain) with ERN1. Part of a cytoplasmic complex made of HIPK1, DAB2IP and MAP3K5 in response to TNF-alpha; this complex formation promotes MAP3K5-JNK activation and subsequent apoptosis. Interacts (via N-terminal domain) with JAK2; the interaction occurs in a IFNG/IFN-gamma-dependent manner and inhibits JAK2 autophosphorylation activity. Interacts (via C2 domain) with GSK3B; the interaction stimulates GSK3B kinase activation. Interacts (via C2 domain) with PPP2CA. Interacts (via proline-rich motif) with a regulatory p85 subunit (via SH3 domain) of the PI3K complex; the interaction inhibits the PI3K-AKT complex activity in a TNF-alpha-dependent manner in prostate cancer (PCa) cells. Interacts with AKT1; the interaction is increased in a TNF-alpha-induced manner. Interacts (via C2 domain and active form preferentially) with KDR/VEGFR2 (tyrosine-phosphorylated active form preferentially); the interaction occurs at the late phase of VEGFA response and inhibits KDR/VEGFR2 activity. Interacts (via N-terminus C2 domain) with MAP3K5 ('Ser-966' dephosphorylated form preferentially); the interaction occurs in a TNF-alpha-induced manner. Interacts (via Ras-GAP domain) with the catalytic subunit of protein phosphatase PP2A; the interaction occurs in resting endothelial cells, is further enhanced by TNF-alpha stimulation and is required to bridge PP2A to MAP3K5. Interacts (via C-terminus PER domain) with TRAF2 (via zinc fingers); the interaction occurs in a TNF-alpha-dependent manner. Interacts with 14-3-3 proteins; the interaction occurs in a TNF-alpha-dependent manner. Interacts (via Ras-GAP domain) with RIPK1 (via kinase domain); the interaction occurs in a TNF-alpha-dependent manner. Interacts with DAB1 and DAB2. Interacts with RAB40C; acts as a GAP for RAB40C. In response to TNF-alpha-induction, phosphorylated at Ser-535; phosphorylation leads to a conformational change, and thus, increases its association with 14-3-3 proteins, MAP3K5, RIPK1 and TRAF2 in endothelial cells; also stimulates regulatory p85 subunit sequestring and PI3K-p85 complex activity inhibition. Expressed in brain, lung, thymus, bladder and skeletal muscle. Up-regulatedd during prostate degeneration.

The protein resides in the cytoplasm. It is found in the cell membrane. Its subcellular location is the membrane. It localises to the cell projection. The protein localises to the dendrite. Functions as a scaffold protein implicated in the regulation of a large spectrum of both general and specialized signaling pathways. Involved in several processes such as innate immune response, inflammation and cell growth inhibition, apoptosis, cell survival, angiogenesis, cell migration and maturation. Also plays a role in cell cycle checkpoint control; reduces G1 phase cyclin levels resulting in G0/G1 cell cycle arrest. Mediates signal transduction by receptor-mediated inflammatory signals, such as the tumor necrosis factor (TNF), interferon (IFN) or lipopolysaccharide (LPS). Modulates the balance between phosphatidylinositol 3-kinase (PI3K)-AKT-mediated cell survival and apoptosis stimulated kinase (MAP3K5)-JNK signaling pathways; sequesters both AKT1 and MAP3K5 and counterbalances the activity of each kinase by modulating their phosphorylation status in response to pro-inflammatory stimuli. Acts as a regulator of the endoplasmic reticulum (ER) unfolded protein response (UPR) pathway; specifically involved in transduction of the ER stress-response to the JNK cascade through ERN1. Mediates TNF-alpha-induced apoptosis activation by facilitating dissociation of inhibitor 14-3-3 from MAP3K5; recruits the PP2A phosphatase complex which dephosphorylates MAP3K5 on 'Ser-966', leading to the dissociation of 13-3-3 proteins and activation of the MAP3K5-JNK signaling pathway in endothelial cells. Acts a negative regulator in the IFN-gamma-mediated JAK-STAT signaling cascade by inhibiting smooth muscle cell (VSMCs) proliferation and intimal expansion, and thus, prevents graft arteriosclerosis (GA). Acts as a GTPase-activating protein (GAP) for the ADP ribosylation factor 6 (ARF6). Promotes hydrolysis of the ARF6-bound GTP and thus, negatively regulates phosphatidylinositol 4,5-bisphosphate (PIP2)-dependent TLR4-TIRAP-MyD88 and NF-kappa-B signaling pathways in endothelial cells in response to lipopolysaccharides (LPS). Binds specifically to phosphatidylinositol 4-phosphate (PtdIns4P) and phosphatidylinositol 3-phosphate (PtdIns3P). In response to vascular endothelial growth factor (VEGFA), acts as a negative regulator of the VEGFR2-PI3K-mediated angiogenic signaling pathway by inhibiting endothelial cell migration and tube formation. In the developing brain, promotes both the transition from the multipolar to the bipolar stage and the radial migration of cortical neurons from the ventricular zone toward the superficial layer of the neocortex in a glial-dependent locomotion process. Probable downstream effector of the Reelin signaling pathway; promotes Purkinje cell (PC) dendrites development and formation of cerebellar synapses. Also functions as a tumor suppressor protein in prostate cancer progression; prevents cell proliferation and epithelial-to-mesenchymal transition (EMT) through activation of the glycogen synthase kinase-3 beta (GSK3B)-induced beta-catenin and inhibition of PI3K-AKT and Ras-MAPK survival downstream signaling cascades, respectively. Mediates TNF/TRAF2-induced MAP3K5-JNK activation, while it inhibits CHUK-NF-kappa-B signaling. Functions as a Ras GTPase-activating protein. May act as a tumor suppressor gene. The sequence is that of Disabled homolog 2-interacting protein (Dab2ip) from Rattus norvegicus (Rat).